The primary structure comprises 219 residues: Cytochrome b6 (219 aa).

A helical membrane pass occupies residues 32-52 (IFYCFGGIVLTAFIFQGASGF). Position 35 (Cys-35) interacts with heme c. Positions 86 and 100 each coordinate heme b. Transmembrane regions (helical) follow at residues 90–110 (SGCM…TGGF), 116–136 (LTWI…VTGY), and 190–210 (IHTF…FSLL). Heme b is bound by residues His-191 and His-206.

Belongs to the cytochrome b family. PetB subfamily. As to quaternary structure, the 4 large subunits of the cytochrome b6-f complex are cytochrome b6, subunit IV (17 kDa polypeptide, PetD), cytochrome f and the Rieske protein, while the 4 small subunits are PetG, PetL, PetM and PetN. The complex functions as a dimer. Requires heme b as cofactor. Heme c serves as cofactor.

It localises to the plastid. Its subcellular location is the chloroplast thylakoid membrane. Its function is as follows. Component of the cytochrome b6-f complex, which mediates electron transfer between photosystem II (PSII) and photosystem I (PSI), cyclic electron flow around PSI, and state transitions. The sequence is that of Cytochrome b6 from Heterocapsa triquetra (Dinoflagellate).